The following is a 177-amino-acid chain: Large ribosomal subunit protein uL6 (177 aa).

The protein belongs to the universal ribosomal protein uL6 family. As to quaternary structure, part of the 50S ribosomal subunit.

This protein binds to the 23S rRNA, and is important in its secondary structure. It is located near the subunit interface in the base of the L7/L12 stalk, and near the tRNA binding site of the peptidyltransferase center. In Cellvibrio japonicus (strain Ueda107) (Pseudomonas fluorescens subsp. cellulosa), this protein is Large ribosomal subunit protein uL6.